We begin with the raw amino-acid sequence, 506 residues long: Beta-glucosidase 13 (506 aa).

Residues 1–25 (MAAAGEVVMLGGILLPLLLVVAVSG) form the signal peptide. Gln-49 is a binding site for a beta-D-glucoside. Asn-118 is a glycosylation site (N-linked (GlcNAc...) asparagine). Residues His-153 and 198–199 (NE) contribute to the a beta-D-glucoside site. Glu-199 (proton donor) is an active-site residue. An intrachain disulfide couples Cys-219 to Cys-226. Asn-225 carries N-linked (GlcNAc...) asparagine glycosylation. Position 342 (Tyr-342) interacts with a beta-D-glucoside. 2 N-linked (GlcNAc...) asparagine glycosylation sites follow: Asn-357 and Asn-367. Glu-413 provides a ligand contact to a beta-D-glucoside. The active-site Nucleophile is Glu-413. The N-linked (GlcNAc...) asparagine glycan is linked to Asn-421. A beta-D-glucoside contacts are provided by residues Trp-462, 469–470 (EW), and Phe-478.

It belongs to the glycosyl hydrolase 1 family.

The catalysed reaction is Hydrolysis of terminal, non-reducing beta-D-glucosyl residues with release of beta-D-glucose.. In Oryza sativa subsp. japonica (Rice), this protein is Beta-glucosidase 13 (BGLU13).